The following is a 775-amino-acid chain: Beta-galactosidase 7 (775 aa).

Positions 1-17 (MRGGMAITAALVVVAAA) are cleaved as a signal peptide. The active-site Proton donor is E185. The active-site Nucleophile is the E256. N-linked (GlcNAc...) asparagine glycans are attached at residues N257, N266, N277, N358, and N602. An SUEL-type lectin domain is found at 689-775 (RGKVPKVRIW…KSLLVVADCR (87 aa)).

This sequence belongs to the glycosyl hydrolase 35 family.

The protein resides in the secreted. The protein localises to the extracellular space. It localises to the apoplast. It carries out the reaction Hydrolysis of terminal non-reducing beta-D-galactose residues in beta-D-galactosides.. In Oryza sativa subsp. japonica (Rice), this protein is Beta-galactosidase 7.